Reading from the N-terminus, the 124-residue chain is Large ribosomal subunit protein bL12 (124 aa).

The protein belongs to the bacterial ribosomal protein bL12 family. As to quaternary structure, homodimer. Part of the ribosomal stalk of the 50S ribosomal subunit. Forms a multimeric L10(L12)X complex, where L10 forms an elongated spine to which 2 to 4 L12 dimers bind in a sequential fashion. Binds GTP-bound translation factors.

Functionally, forms part of the ribosomal stalk which helps the ribosome interact with GTP-bound translation factors. Is thus essential for accurate translation. The protein is Large ribosomal subunit protein bL12 of Liberibacter africanus subsp. capensis.